A 375-amino-acid chain; its full sequence is Putrescine N-methyltransferase 1 (375 aa).

2 stretches are compositionally biased toward polar residues: residues His24 to Thr50 and His57 to Leu77. Residues His24 to Leu77 form a disordered region. In terms of domain architecture, PABS spans Pro86–Thr323. S-adenosyl-L-methionine-binding positions include Gln117, Glu192, and Asp223 to Gly224. Asp242 functions as the Proton acceptor in the catalytic mechanism. Residue Tyr311 coordinates S-adenosyl-L-methionine.

It belongs to the class I-like SAM-binding methyltransferase superfamily. Putrescine methyltransferase family. In terms of tissue distribution, predominantly expressed in roots.

It catalyses the reaction putrescine + S-adenosyl-L-methionine = N-methylputrescine + S-adenosyl-L-homocysteine + H(+). It participates in alkaloid biosynthesis; nicotine biosynthesis. Its function is as follows. Involved in the biosynthesis of pyridine alkaloid natural products, leading mainly to the production of anabasine, anatabine, nicotine and nornicotine, effective deterrents against herbivores with antiparasitic and pesticide properties (neurotoxins); nornicotine serves as the precursor in the synthesis of the carcinogen compound N'-nitrosonornicotine (NNN). Methyltransferase that mediates the conversion of putrescine to N-methylputrescine. Promotes leaves ripening. This chain is Putrescine N-methyltransferase 1, found in Nicotiana tabacum (Common tobacco).